We begin with the raw amino-acid sequence, 65 residues long: Double gene block protein 1 (65 aa).

Residues 1–41 (MDSQRTVELTNPRGRSKERGDSGGKQKNSMGRKIANDAISE) form a disordered region. Basic and acidic residues predominate over residues 15-24 (RSKERGDSGG). Residues 17–43 (KERGDSGGKQKNSMGRKIANDAISESK) are RNA-binding.

The protein belongs to the carmovirus double gene block protein 1 family. In terms of assembly, homodimer.

Its function is as follows. Cell-to-cell movement. Displays RNA-binding activity. The polypeptide is Double gene block protein 1 (Melon necrotic spot virus (MNSV)).